The primary structure comprises 346 residues: Tryptophan--tRNA ligase (346 aa).

Residues 10–12 (QAS) and 18–19 (GN) contribute to the ATP site. The 'HIGH' region motif lies at 11–19 (ASGKQHLGN). Asp140 lines the L-tryptophan pocket. Residues 152–154 (GND), Ile191, and 200–204 (KMSKS) each bind ATP. The 'KMSKS' region motif lies at 200 to 204 (KMSKS).

Belongs to the class-I aminoacyl-tRNA synthetase family. In terms of assembly, homodimer.

It localises to the cytoplasm. It catalyses the reaction tRNA(Trp) + L-tryptophan + ATP = L-tryptophyl-tRNA(Trp) + AMP + diphosphate + H(+). Catalyzes the attachment of tryptophan to tRNA(Trp). The chain is Tryptophan--tRNA ligase from Mycoplasma pneumoniae (strain ATCC 29342 / M129 / Subtype 1) (Mycoplasmoides pneumoniae).